A 407-amino-acid chain; its full sequence is Probable tRNA sulfurtransferase (407 aa).

Positions 61–165 (NEITYRLSKI…LDAIYMYEEV (105 aa)) constitute a THUMP domain. Residues 183 to 184 (ML), 208 to 209 (HF), R265, G287, and Q296 contribute to the ATP site.

It belongs to the ThiI family.

It is found in the cytoplasm. The enzyme catalyses [ThiI sulfur-carrier protein]-S-sulfanyl-L-cysteine + a uridine in tRNA + 2 reduced [2Fe-2S]-[ferredoxin] + ATP + H(+) = [ThiI sulfur-carrier protein]-L-cysteine + a 4-thiouridine in tRNA + 2 oxidized [2Fe-2S]-[ferredoxin] + AMP + diphosphate. The catalysed reaction is [ThiS sulfur-carrier protein]-C-terminal Gly-Gly-AMP + S-sulfanyl-L-cysteinyl-[cysteine desulfurase] + AH2 = [ThiS sulfur-carrier protein]-C-terminal-Gly-aminoethanethioate + L-cysteinyl-[cysteine desulfurase] + A + AMP + 2 H(+). It functions in the pathway cofactor biosynthesis; thiamine diphosphate biosynthesis. In terms of biological role, catalyzes the ATP-dependent transfer of a sulfur to tRNA to produce 4-thiouridine in position 8 of tRNAs, which functions as a near-UV photosensor. Also catalyzes the transfer of sulfur to the sulfur carrier protein ThiS, forming ThiS-thiocarboxylate. This is a step in the synthesis of thiazole, in the thiamine biosynthesis pathway. The sulfur is donated as persulfide by IscS. This is Probable tRNA sulfurtransferase from Staphylococcus aureus (strain Mu3 / ATCC 700698).